The following is a 357-amino-acid chain: Peptide chain release factor 1 (357 aa).

Q236 carries the N5-methylglutamine modification.

The protein belongs to the prokaryotic/mitochondrial release factor family. Post-translationally, methylated by PrmC. Methylation increases the termination efficiency of RF1.

The protein localises to the cytoplasm. In terms of biological role, peptide chain release factor 1 directs the termination of translation in response to the peptide chain termination codons UAG and UAA. The protein is Peptide chain release factor 1 of Mycolicibacterium paratuberculosis (strain ATCC BAA-968 / K-10) (Mycobacterium paratuberculosis).